The primary structure comprises 527 residues: uncharacterized protein (527 aa).

Disordered regions lie at residues 1 to 49 (MSSF…IKDE), 99 to 307 (DFNF…ATTT), 319 to 353 (TEINNNNSNSNNLPSIPIGNEKSKINDNQDEEDEN), and 382 to 419 (YINNDDGDDDDDDDENENENDSQPEEEYEENKQQQQQE). The segment covering 8 to 17 (YDDESEEEDN) has biased composition (acidic residues). Composition is skewed to low complexity over residues 18–44 (NNNNNNNNNNNNNNIINNNNNNNNSNN) and 99–115 (DFNFYNNNNNSNSNSNN). Basic and acidic residues predominate over residues 141–150 (NEFRNPDLKN). Composition is skewed to low complexity over residues 167-178 (SSQNTTTTQQSS) and 186-222 (NNNNNNNNNNNNNNNNNNNNNNNNNNNNNNNNNNSNN). The segment covering 229 to 248 (DDKSKKINENENTVNKKDNI) has biased composition (basic and acidic residues). The span at 283 to 296 (LRKKLLKNQPKTKK) shows a compositional bias: basic residues. Low complexity-rich tracts occupy residues 297-307 (STTTTTTATTT) and 319-330 (TEINNNNSNSNN). The span at 386–410 (DDGDDDDDDDENENENDSQPEEEYE) shows a compositional bias: acidic residues.

This is an uncharacterized protein from Dictyostelium discoideum (Social amoeba).